A 95-amino-acid chain; its full sequence is Aspartyl/glutamyl-tRNA(Asn/Gln) amidotransferase subunit C (95 aa).

This sequence belongs to the GatC family. Heterotrimer of A, B and C subunits.

The enzyme catalyses L-glutamyl-tRNA(Gln) + L-glutamine + ATP + H2O = L-glutaminyl-tRNA(Gln) + L-glutamate + ADP + phosphate + H(+). The catalysed reaction is L-aspartyl-tRNA(Asn) + L-glutamine + ATP + H2O = L-asparaginyl-tRNA(Asn) + L-glutamate + ADP + phosphate + 2 H(+). Its function is as follows. Allows the formation of correctly charged Asn-tRNA(Asn) or Gln-tRNA(Gln) through the transamidation of misacylated Asp-tRNA(Asn) or Glu-tRNA(Gln) in organisms which lack either or both of asparaginyl-tRNA or glutaminyl-tRNA synthetases. The reaction takes place in the presence of glutamine and ATP through an activated phospho-Asp-tRNA(Asn) or phospho-Glu-tRNA(Gln). In Azorhizobium caulinodans (strain ATCC 43989 / DSM 5975 / JCM 20966 / LMG 6465 / NBRC 14845 / NCIMB 13405 / ORS 571), this protein is Aspartyl/glutamyl-tRNA(Asn/Gln) amidotransferase subunit C.